A 112-amino-acid polypeptide reads, in one-letter code: Large ribosomal subunit protein mL53 (112 aa).

This sequence belongs to the mitochondrion-specific ribosomal protein mL53 family. Component of the mitochondrial ribosome large subunit (39S) which comprises a 16S rRNA and about 50 distinct proteins.

The protein localises to the mitochondrion. The sequence is that of Large ribosomal subunit protein mL53 (MRPL53) from Pongo abelii (Sumatran orangutan).